The chain runs to 1837 residues: MELMFAEWEDGERFSFEDSDRFEEDSLCSFISEAESLCQNWRGWRKQSAGPNSPTGGGGGGGSGGTRMRDGLVIPLVELSAKQVAFHIPFEVVEKVYPPVPEQLQLRIAFWSFPENEEDIRLYSCLANGSADEFQRGDQLFRMRAVKDPLQIGFHLSATVVPPQMVPPKGAYNVAVMFDRCRVTSCSCTCGAGAKWCTHVVALCLFRIHNASAVCLRAPVSESLSRLQRDQLQKFAQYLISELPQQILPTAQRLLDELLSSQSTAINTVCGAPDPTAGPSASDQSTWYLDESTLTDNIKKTLHKFCGPSPVVFSDVNSMYLSSTEPPAAAEWACLLRPLRGREPEGVWNLLSIVREMFKRRDSNAAPLLEILTDQCLTYEQITGWWYSVRTSASHSSASGHTGRSNGQSEVAAHACASMCDEMVTLWRLAVLDPALSPQRRRELCTQLRQWQLKVIENVKRGQHKKTLERLFPGFRPAVEACYFNWEEAYPLPGVTYSGTDRKLALCWARALPSRPGASRSGGLEESRDRPRPLPTEPAVRPKEPGTKRKGLGEGVPSSQRGPRRLSAEGGDKALHKMGPGGGKAKALGGAGSGSKGSAGGGSKRRLSSEDSSLEPDLAEMSLDDSSLALGAEASTFGGFPESPPPCPLHGGSRGPSTFLPEPPDTYEEDGGVYFSEGPEPPTASVGPPGLLPGDVCTQDDLPSTDESGNGLPKTKEAAPAVGEEDDDYQAYYLNAQDGAGGEEEKAEGGAGEEHDLFAGLKPLEQESRMEVLFACAEALHAHGYSSEASRLTVELAQDLLANPPDLKVEPPPAKGKKNKVSTSRQTWVATNTLSKAAFLLTVLSERPEHHNLAFRVGMFALELQRPPASTKALEVKLAYQESEVAALLKKIPLGPSEMSTMRCRAEELREGTLCDYRPVLPLMLASFIFDVLCAPGSRPPSRNWNSETPGDEELGFEAAVAALGMKTTVSEAEHPLLCEGTRREKGDLALALMITYKDDQAKLKKILDKLLDRESQTHKPQTLSSFYSSSRPTTASQRSPSKHGGPSAPGALQPLTSGSAGPAQPGSVAGAGPGPTEGFTEKNVPESSPHSPCEGLPSEAALTPRPEGKVPSRLALGSRGGYNGRGWGSPGRPKKKHTGMASIDSSAPETTSDSSPTLSRRPLRGGWAPTSWGRGQDSDSISSSSSDSLGSSSSSGSRRASASGGARAKTVEVGRYKGRRPESHAPHVPNQPSEAAAHFYFELAKTVLIKAGGNSSTSIFTHPSSSGGHQGPHRNLHLCAFEIGLYALGLHNFVSPNWLSRTYSSHVSWITGQAMEIGSAALTILVECWDGHLTPPEVASLADRASRARDSNMVRAAAELALSCLPHAHALNPNEIQRALVQCKEQDNLMLEKACMAVEEAAKGGGVYPEVLFEVAHQWFWLYEQTAGGSSTAREGATSCSASGIRAGGEAGRGMPEGRGGPGTEPVTVAAAAVTAAATVVPVISVGSSLYPGPGLGHGHSPGLHPYTALQPHLPCSPQYLTHPAHPAHPMPHMPRPAVFPVPSSAYPQGVHPAFLGAQYPYSVTPPSLAATAVSFPVPSMAPITVHPYHTEPGLPLPTSVACELWGQGTVSSVHPASTFPAIQGASLPALTTQPSPLVSGGFPPPEEETHSQPVNPHSLHHLHAAYRVGMLALEMLGRRAHNDHPNNFSRSPPYTDDVKWLLGLAAKLGVNYVHQFCVGAAKGVLSPFVLQEIVMETLQRLSPAHAHNHLRAPAFHQLVQRCQQAYMQYIHHRLIHLTPADYDDFVNAIRSARSAFCLTPMGMMQFNDILQNLKRSKQTKELWQRVSLEMATFSP.

Phosphoserine occurs at positions 36, 48, and 53. The segment at 45–65 is disordered; that stretch reads RKQSAGPNSPTGGGGGGGSGG. A compositionally biased stretch (gly residues) spans 55–65; sequence TGGGGGGGSGG. The segment at 172 to 208 adopts an SWIM-type zinc-finger fold; that stretch reads YNVAVMFDRCRVTSCSCTCGAGAKWCTHVVALCLFRI. Ser-437 carries the phosphoserine modification. 3 disordered regions span residues 514-727, 803-823, and 1016-1232; these read SRPG…EEDD, NPPDLKVEPPPAKGKKNKVST, and SQTH…VPNQ. Composition is skewed to basic and acidic residues over residues 523–532 and 566–575; these read GLEESRDRPR and LSAEGGDKAL. A Phosphoserine modification is found at Ser-567. The span at 579–602 shows a compositional bias: gly residues; sequence GPGGGKAKALGGAGSGSKGSAGGG. Positions 1019–1040 are enriched in polar residues; sequence HKPQTLSSFYSSSRPTTASQRS. Residues 1119-1130 are compositionally biased toward gly residues; sequence SRGGYNGRGWGS. Thr-1139 is modified (phosphothreonine). The span at 1144-1159 shows a compositional bias: polar residues; the sequence is IDSSAPETTSDSSPTL. Ser-1153, Ser-1156, and Ser-1160 each carry phosphoserine. The segment covering 1174–1209 has biased composition (low complexity); that stretch reads GRGQDSDSISSSSSDSLGSSSSSGSRRASASGGARA. Residues 1210–1226 are compositionally biased toward basic and acidic residues; that stretch reads KTVEVGRYKGRRPESHA. Ser-1267 bears the Phosphoserine mark. Disordered stretches follow at residues 1442–1464 and 1635–1656; these read SASGIRAGGEAGRGMPEGRGGPG and QPSPLVSGGFPPPEEETHSQPV. The span at 1447-1464 shows a compositional bias: gly residues; it reads RAGGEAGRGMPEGRGGPG. Phosphoserine is present on Ser-1836.

It belongs to the ZSWIM8 family. Component of the SCF-like E3 ubiquitin-protein ligase complex which contains CUL3, RBX1, ELOB, ELOC and ZSWIM8. In terms of assembly, (Microbial infection) Interacts with Zika virus protein NS5; this interaction allows STAT2 binding and subsequent proteasomal degradation.

The protein resides in the cytoplasm. Its subcellular location is the cytosol. Its pathway is protein modification; protein ubiquitination. In terms of biological role, substrate recognition component of a SCF-like E3 ubiquitin-protein ligase complex that promotes target-directed microRNA degradation (TDMD), a process that mediates degradation of microRNAs (miRNAs). The SCF-like E3 ubiquitin-protein ligase complex acts by catalyzing ubiquitination and subsequent degradation of AGO proteins (AGO1, AGO2, AGO3 and/or AGO4), thereby exposing miRNAs for degradation. Specifically recognizes and binds AGO proteins when they are engaged with a TDMD target. May also act as a regulator of axon guidance: specifically recognizes misfolded ROBO3 and promotes its ubiquitination and subsequent degradation. Plays an essential role for proper embryonic development of heart and lung. Controls protein quality of DAB1, a key signal molecule for brain development, thus protecting its signaling strength. Mechanistically, recognizes intrinsically disordered regions of DAB1 and eliminates misfolded DAB1 that cannot be properly phosphorylated. Functionally, (Microbial infection) Participates in Zika virus inhibition of IFN signaling by acting as a scaffold protein to connect ZSWIM8/CUL3 ligase complex and STAT2, leading to STAT2 degradation. In Homo sapiens (Human), this protein is Zinc finger SWIM domain-containing protein 8.